A 451-amino-acid chain; its full sequence is Runt-related transcription factor 1 (451 aa).

The interval 1 to 37 (MRIPVDASTSRRFTPPSTALSPGKMSEALPLGAPDGG) is disordered. Residues 7-20 (ASTSRRFTPPSTAL) show a composition bias toward polar residues. Residue Thr14 is modified to Phosphothreonine. A Phosphoserine modification is found at Ser21. Residues Lys24 and Lys43 each carry the N6-acetyllysine modification. Residues 50–178 (SMVEVLADHP…TVDGPREPRR (129 aa)) form the Runt domain. Residues 80 to 84 (RCNKT) form an interaction with DNA region. Asn112, Glu116, Arg139, and Val170 together coordinate chloride. 2 interaction with DNA regions span residues 135–143 (RFVGRSGRG) and 168–177 (ITVDGPREPR). Disordered stretches follow at residues 170–195 (VDGPREPRRHRQKLDDQTKPGSLSFS) and 209–252 (MRVS…SPPW). Phosphoserine occurs at positions 193 and 212. Over residues 222-247 (PRASLNHSTAFNPQPQSQMQDARQIQ) the composition is skewed to polar residues. Ser249 is subject to Phosphoserine; by HIPK2. Phosphoserine occurs at positions 266 and 268. The disordered stretch occupies residues 268–290 (SVHPATPISPGRASGMTSLSAEL). At Thr273 the chain carries Phosphothreonine; by HIPK2. Phosphoserine; by HIPK2 is present on Ser276. The interval 291–370 (SSRLSTAPDL…SQAQAGPFQT (80 aa)) is interaction with KAT6A. Thr296 carries the phosphothreonine modification. Residues 307–399 (RQFPTLPSIS…MVGGERSPPR (93 aa)) are interaction with KAT6B. The tract at residues 361–401 (SQAQAGPFQTGSPSYHLYYGASAGSYQFSMVGGERSPPRIL) is interaction with FOXP3. Residues 406-451 (NASTGAALLNPSLPSQSDVVETEGSHSNSPTNMPPARLEEAVWRPY) are disordered. The span at 417-436 (SLPSQSDVVETEGSHSNSPT) shows a compositional bias: polar residues. Phosphoserine is present on Ser434. Basic and acidic residues predominate over residues 442 to 451 (RLEEAVWRPY).

As to quaternary structure, heterodimer with CBFB. RUNX1 binds DNA as a monomer and through the Runt domain. DNA-binding is increased by heterodimerization. Interacts with TLE1 and ALYREF/THOC4. Interacts with HIPK2, ELF1, ELF2 and SPI1. Interacts via its Runt domain with the ELF4 N-terminal region. Interaction with ELF2 isoform 2 (NERF-1a) may act to repress RUNX1-mediated transactivation. Interacts with KAT6A and KAT6B. Interacts with SUV39H1, leading to abrogation of transactivating and DNA-binding properties of RUNX1. Interacts with YAP1. Interaction with CDK6 prevents myeloid differentiation, reducing its transcription transactivation activity. Found in a complex with PRMT5, RUNX1 and CBFB. Interacts with FOXP3. Interacts with TBX21. Interacts with DPF2. Phosphorylated in its C-terminus upon IL-6 treatment. Phosphorylation enhances interaction with KAT6A. Post-translationally, methylated. In terms of processing, phosphorylated in Ser-249 Thr-273 and Ser-276 by HIPK2 when associated with CBFB and DNA. This phosphorylation promotes subsequent EP300 phosphorylation. As to expression, isoform 4 is expressed at high levels in thymus, spleen and T-cell lines and at lower levels in myeloid cell lines and nonhematopoietic cells. Isoform 5 is expressed ubiquitously in lumbar vertebrae, brain, kidney, heart, muscle, ovary and osteoblast-like cell line MC3T3-E1.

Its subcellular location is the nucleus. Functionally, forms the heterodimeric complex core-binding factor (CBF) with CBFB. RUNX members modulate the transcription of their target genes through recognizing the core consensus binding sequence 5'-TGTGGT-3', or very rarely, 5'-TGCGGT-3', within their regulatory regions via their runt domain, while CBFB is a non-DNA-binding regulatory subunit that allosterically enhances the sequence-specific DNA-binding capacity of RUNX. The heterodimers bind to the core site of a number of enhancers and promoters, including murine leukemia virus, polyomavirus enhancer, T-cell receptor enhancers, LCK, IL3 and GM-CSF promoters. Essential for the development of normal hematopoiesis. Acts synergistically with ELF4 to transactivate the IL-3 promoter and with ELF2 to transactivate the BLK promoter. Inhibits KAT6B-dependent transcriptional activation. Involved in lineage commitment of immature T cell precursors. CBF complexes repress ZBTB7B transcription factor during cytotoxic (CD8+) T cell development. They bind to RUNX-binding sequence within the ZBTB7B locus acting as transcriptional silencer and allowing for cytotoxic T cell differentiation. CBF complexes binding to the transcriptional silencer is essential for recruitment of nuclear protein complexes that catalyze epigenetic modifications to establish epigenetic ZBTB7B silencing. Controls the anergy and suppressive function of regulatory T-cells (Treg) by associating with FOXP3. Activates the expression of IL2 and IFNG and down-regulates the expression of TNFRSF18, IL2RA and CTLA4, in conventional T-cells. Positively regulates the expression of RORC in T-helper 17 cells. Its function is as follows. Isoform 4 shows higher binding activities for target genes and binds TCR-beta-E2 and RAG-1 target site with threefold higher affinity than other isoforms. It is less effective in the context of neutrophil terminal differentiation. This is Runt-related transcription factor 1 (Runx1) from Mus musculus (Mouse).